An 87-amino-acid chain; its full sequence is Small ribosomal subunit protein bS20 (87 aa).

This sequence belongs to the bacterial ribosomal protein bS20 family.

Binds directly to 16S ribosomal RNA. This Rickettsia bellii (strain OSU 85-389) protein is Small ribosomal subunit protein bS20.